Here is a 762-residue protein sequence, read N- to C-terminus: 5-methyltetrahydropteroyltriglutamate--homocysteine methyltransferase (762 aa).

5-methyltetrahydropteroyltri-L-glutamate is bound by residues 16–19 (RELK) and Lys117. Residues 438-440 (IGS) and Glu491 each bind L-homocysteine. L-methionine-binding positions include 438 to 440 (IGS) and Glu491. Residues 522–523 (RC) and Trp568 contribute to the 5-methyltetrahydropteroyltri-L-glutamate site. Position 606 (Asp606) interacts with L-homocysteine. Asp606 serves as a coordination point for L-methionine. Position 612 (Glu612) interacts with 5-methyltetrahydropteroyltri-L-glutamate. His648, Cys650, and Glu672 together coordinate Zn(2+). His701 (proton donor) is an active-site residue. Cys733 provides a ligand contact to Zn(2+).

The protein belongs to the vitamin-B12 independent methionine synthase family. Zn(2+) serves as cofactor.

It catalyses the reaction 5-methyltetrahydropteroyltri-L-glutamate + L-homocysteine = tetrahydropteroyltri-L-glutamate + L-methionine. It functions in the pathway amino-acid biosynthesis; L-methionine biosynthesis via de novo pathway; L-methionine from L-homocysteine (MetE route): step 1/1. Catalyzes the transfer of a methyl group from 5-methyltetrahydrofolate to homocysteine resulting in methionine formation. The polypeptide is 5-methyltetrahydropteroyltriglutamate--homocysteine methyltransferase (Pseudomonas fluorescens (strain ATCC BAA-477 / NRRL B-23932 / Pf-5)).